The chain runs to 78 residues: U-scoloptoxin(13)-Er1a (78 aa).

Positions 1-24 are cleaved as a signal peptide; that stretch reads MFPSWSTTFVLCMGLCSLMNGALA.

Belongs to the scoloptoxin-13 family. Post-translationally, contains 4 disulfide bonds. Expressed by the venom gland.

Its subcellular location is the secreted. The polypeptide is U-scoloptoxin(13)-Er1a (Ethmostigmus rubripes (Giant centipede)).